Here is a 1777-residue protein sequence, read N- to C-terminus: Fatty acid synthase subunit alpha (1777 aa).

Residues 101-124 are disordered; sequence APVESADNEPAQPAASSTPAAPAP. The span at 110-120 shows a compositional bias: low complexity; that stretch reads PAQPAASSTPA. Residues 151-237 enclose the Carrier domain; it reads LSAIDVVISI…KVMGGHIDRL (87 aa). An O-(pantetheine 4'-phosphoryl)serine modification is found at Ser186. The interval 563 to 803 is ketoreductase (KR) domain; the sequence is FTGRRVLVTG…ILSLLSGDIL (241 aa). The Ketosynthase family 3 (KS3) domain maps to 1007 to 1539; it reads KEIMHEVVID…QKGGLVVGIA (533 aa). Catalysis depends on for beta-ketoacyl synthase activity residues Cys1193, His1424, and His1465. Residue Asp1661 participates in Mg(2+) binding. Acetyl-CoA contacts are provided by residues 1661–1663, 1706–1716, 1730–1734, and 1760–1762; these read DIE, EAIFKSLQIPS, SNGAQ, and ITH.

Belongs to the thiolase-like superfamily. Fungal fatty acid synthetase subunit alpha family. Fatty acid synthase is composed of alpha and beta subunits.

It catalyses the reaction acetyl-CoA + n malonyl-CoA + 2n NADPH + 4n H(+) = a long-chain-acyl-CoA + n CoA + n CO2 + 2n NADP(+).. It carries out the reaction a fatty acyl-[ACP] + malonyl-[ACP] + H(+) = a 3-oxoacyl-[ACP] + holo-[ACP] + CO2. The catalysed reaction is a (3R)-hydroxyacyl-[ACP] + NADP(+) = a 3-oxoacyl-[ACP] + NADPH + H(+). It functions in the pathway secondary metabolite biosynthesis. Functionally, fatty acid synthase alpha subunit; part of the gene cluster that mediates the biosynthesis of oryzines, natural products with an unusual maleidride backbone. The two subunits of the fungal fatty acid synthase oryfasA and oryfasB probably form octenoic acid. This fatty acid is most likely activated by the acyl-CoA ligase oryP to give octenyl-CoA before the citrate synthase-like protein oryE catalyzes condensation with oxaloacetate to form tricarboxylic acid. The next steps of the pathways are conjectural, but a favorite possible route has been proposed, beginning with decarboxylation and concomitant dehydration by the decarboxylase oryM, followed by tautomerization, which may lead to the production of a diene intermediate. Reduction of this diene intermediate could give the known metabolite piliformic acid. On the pathway to oryzine B and oryzine A, however, hydroxylation of the diene by the alpha-ketoglutarate-dependent dioxygenase oryG and lactonisation by the lactonohydrolases oryH or oryL could give oryzine B directly. Finally, enoyl reduction by the dehydrogenase oryD would then convert oryzine B into oryzine A. The sequence is that of Fatty acid synthase subunit alpha from Aspergillus oryzae (strain ATCC 42149 / RIB 40) (Yellow koji mold).